The primary structure comprises 223 residues: MVKFAVVVFPGTNCDFETERAIRKAGAEAERVWYKTSLKDFDGVVLPGGFSYADYLRAGAIAARQEIIEEVKEFARDGKPVLGICNGFQVLTEAGLLPGALRPNKVPRFICRWVHLRVADTETPFTQFYEPGEVIRMPIAHAEGNYYADDPSKVRIAFQYSDEEGNITEEANPNGSLLNIAAIANENGNVLGTMPHPERASDRFLGSEDGLKLFRSMVEWARK.

The 220-residue stretch at 4–223 folds into the Glutamine amidotransferase type-1 domain; the sequence is FAVVVFPGTN…FRSMVEWARK (220 aa). C85 functions as the Nucleophile in the catalytic mechanism. Residues H196 and E198 contribute to the active site.

Part of the FGAM synthase complex composed of 1 PurL, 1 PurQ and 2 PurS subunits.

The protein localises to the cytoplasm. The enzyme catalyses N(2)-formyl-N(1)-(5-phospho-beta-D-ribosyl)glycinamide + L-glutamine + ATP + H2O = 2-formamido-N(1)-(5-O-phospho-beta-D-ribosyl)acetamidine + L-glutamate + ADP + phosphate + H(+). The catalysed reaction is L-glutamine + H2O = L-glutamate + NH4(+). It functions in the pathway purine metabolism; IMP biosynthesis via de novo pathway; 5-amino-1-(5-phospho-D-ribosyl)imidazole from N(2)-formyl-N(1)-(5-phospho-D-ribosyl)glycinamide: step 1/2. In terms of biological role, part of the phosphoribosylformylglycinamidine synthase complex involved in the purines biosynthetic pathway. Catalyzes the ATP-dependent conversion of formylglycinamide ribonucleotide (FGAR) and glutamine to yield formylglycinamidine ribonucleotide (FGAM) and glutamate. The FGAM synthase complex is composed of three subunits. PurQ produces an ammonia molecule by converting glutamine to glutamate. PurL transfers the ammonia molecule to FGAR to form FGAM in an ATP-dependent manner. PurS interacts with PurQ and PurL and is thought to assist in the transfer of the ammonia molecule from PurQ to PurL. This Thermococcus kodakarensis (strain ATCC BAA-918 / JCM 12380 / KOD1) (Pyrococcus kodakaraensis (strain KOD1)) protein is Phosphoribosylformylglycinamidine synthase subunit PurQ.